The primary structure comprises 364 residues: DNA polymerase IV (364 aa).

Positions Ile14–Gly198 constitute a UmuC domain. Mg(2+) is bound by residues Asp18 and Asp116. The active site involves Glu117.

The protein belongs to the DNA polymerase type-Y family. Monomer. Mg(2+) is required as a cofactor.

It localises to the cytoplasm. The catalysed reaction is DNA(n) + a 2'-deoxyribonucleoside 5'-triphosphate = DNA(n+1) + diphosphate. In terms of biological role, poorly processive, error-prone DNA polymerase involved in untargeted mutagenesis. Copies undamaged DNA at stalled replication forks, which arise in vivo from mismatched or misaligned primer ends. These misaligned primers can be extended by PolIV. Exhibits no 3'-5' exonuclease (proofreading) activity. May be involved in translesional synthesis, in conjunction with the beta clamp from PolIII. This Streptococcus pyogenes serotype M5 (strain Manfredo) protein is DNA polymerase IV.